A 329-amino-acid chain; its full sequence is MKQGLISIIIPSYNEGYNVKLIHESLKKEFKNIHYDYEIFFINDGSVDDTLQQIKDLAATCSRVKYISFSRNFGKEAAILAGFEHVQGEAVIVMDADLQHPTYLLKEFIKGYEEGYDQVIAQRNRKGDSFVRSLLSSMYYKFINKAVEVDLRDGVGDFRLLSRQAVNALLKLSEGNRFSKGLFCWIGFDQKIVFYENVERKNGTSKWSFSSLFNYGMDGVVSFNHKPLRLCFYTGIFILLLSIIYIIATFVKILTNGISVPGYFTIISAVLFLGGVQLLSLGIIGEYIGRIYYETKKRPHYLIKEANIPNKDLPETNELKSMRRLTKMH.

Transmembrane regions (helical) follow at residues 231-251 and 264-284; these read CFYT…ATFV and FTII…LGII.

Belongs to the glycosyltransferase 2 family. GtrB subfamily.

The protein localises to the cell membrane. In Bacillus subtilis (strain 168), this protein is Putative glycosyltransferase CsbB (csbB).